The primary structure comprises 578 residues: Proline--tRNA ligase (578 aa).

Belongs to the class-II aminoacyl-tRNA synthetase family. ProS type 1 subfamily. As to quaternary structure, homodimer.

The protein localises to the cytoplasm. It catalyses the reaction tRNA(Pro) + L-proline + ATP = L-prolyl-tRNA(Pro) + AMP + diphosphate. Functionally, catalyzes the attachment of proline to tRNA(Pro) in a two-step reaction: proline is first activated by ATP to form Pro-AMP and then transferred to the acceptor end of tRNA(Pro). As ProRS can inadvertently accommodate and process non-cognate amino acids such as alanine and cysteine, to avoid such errors it has two additional distinct editing activities against alanine. One activity is designated as 'pretransfer' editing and involves the tRNA(Pro)-independent hydrolysis of activated Ala-AMP. The other activity is designated 'posttransfer' editing and involves deacylation of mischarged Ala-tRNA(Pro). The misacylated Cys-tRNA(Pro) is not edited by ProRS. This is Proline--tRNA ligase from Burkholderia pseudomallei (strain K96243).